Consider the following 484-residue polypeptide: tRNA sulfurtransferase (484 aa).

The THUMP domain maps to 63–167; that stretch reads EAFAERLACI…KESLYLVSKR (105 aa). ATP-binding positions include 185 to 186, Lys-267, Gly-289, and Gln-298; that span reads LI. An intrachain disulfide couples Cys-346 to Cys-458. Positions 406–484 constitute a Rhodanese domain; that stretch reads INSGEVIIDV…GYDNVKVYRP (79 aa). Cys-458 functions as the Cysteine persulfide intermediate in the catalytic mechanism.

This sequence belongs to the ThiI family.

The protein resides in the cytoplasm. The enzyme catalyses [ThiI sulfur-carrier protein]-S-sulfanyl-L-cysteine + a uridine in tRNA + 2 reduced [2Fe-2S]-[ferredoxin] + ATP + H(+) = [ThiI sulfur-carrier protein]-L-cysteine + a 4-thiouridine in tRNA + 2 oxidized [2Fe-2S]-[ferredoxin] + AMP + diphosphate. The catalysed reaction is [ThiS sulfur-carrier protein]-C-terminal Gly-Gly-AMP + S-sulfanyl-L-cysteinyl-[cysteine desulfurase] + AH2 = [ThiS sulfur-carrier protein]-C-terminal-Gly-aminoethanethioate + L-cysteinyl-[cysteine desulfurase] + A + AMP + 2 H(+). Its pathway is cofactor biosynthesis; thiamine diphosphate biosynthesis. Catalyzes the ATP-dependent transfer of a sulfur to tRNA to produce 4-thiouridine in position 8 of tRNAs, which functions as a near-UV photosensor. Also catalyzes the transfer of sulfur to the sulfur carrier protein ThiS, forming ThiS-thiocarboxylate. This is a step in the synthesis of thiazole, in the thiamine biosynthesis pathway. The sulfur is donated as persulfide by IscS. The chain is tRNA sulfurtransferase from Shewanella woodyi (strain ATCC 51908 / MS32).